Consider the following 477-residue polypeptide: MRVLFATAEAWPLAKTGGLGDVAFGLTRALAELDCDVRLLMPAYPGTVEQLEGEVRRHTAELAGEGVTLIEGRLPGTGVGVWLLDDPPLFARVGGPYATAGGDAWPDNHWRFLRLSQVAAALAAGDLLDWRAEVLHGNDWQTALAPVFLRDRADRPATVFGIHNLAYRGLFPAELYPRLGLPAELWQPEGLEFYGQLAFIKGSLVFADTLVTVSPTYAREIQTPAFGWGLDGLLHHRRDRLFGIVNGIDTATWDPGSDRHLVAQYTGPDDRARAANRRAVARAVGLSEGEGPILGFVGRLVEQKGVDLILAALPRLLAAGAQLALLGAGDHRLETALRAAAEQHPGQVGVVIGYDEALAHQIEAGSDLFLMPSRFEPCGLNQLYSLRYGTPPVVYPTGGLADTVVDVDAHPQSGNGFHLAASDGAALAAAVERALAHWQDRPTWHAIQARGMAGTYSWAASAQAYQDLYRQVVASRG.

Lys15 contributes to the ADP-alpha-D-glucose binding site.

Belongs to the glycosyltransferase 1 family. Bacterial/plant glycogen synthase subfamily.

The catalysed reaction is [(1-&gt;4)-alpha-D-glucosyl](n) + ADP-alpha-D-glucose = [(1-&gt;4)-alpha-D-glucosyl](n+1) + ADP + H(+). It functions in the pathway glycan biosynthesis; glycogen biosynthesis. In terms of biological role, synthesizes alpha-1,4-glucan chains using ADP-glucose. The sequence is that of Glycogen synthase from Halorhodospira halophila (strain DSM 244 / SL1) (Ectothiorhodospira halophila (strain DSM 244 / SL1)).